Here is a 316-residue protein sequence, read N- to C-terminus: Long form salivary protein D7L1 (316 aa).

A signal peptide spans 1–23 (MSHTRAVVLAVACLCLILVQVEG). 4 disulfides stabilise this stretch: cysteine 40/cysteine 76, cysteine 72/cysteine 131, cysteine 181/cysteine 214, and cysteine 255/cysteine 266.

This sequence belongs to the PBP/GOBP family.

It is found in the secreted. Its function is as follows. Modulates blood feeding of female mosquitoes on vertebrate species by binding and sequestering different mediators involved in the host response, such as biogenic amines and eicosanoids. Binds serotonin, tryptamine, histamine, leukotriene C4, leukotriene D4 and leukotriene E4. Does not bind octopamine, dopamine, noradrenaline, adrenaline and prostaglandin PGF2alpha. In Anopheles atroparvus (European mosquito), this protein is Long form salivary protein D7L1.